We begin with the raw amino-acid sequence, 197 residues long: Nucleoid occlusion factor SlmA (197 aa).

Residues 7 to 67 form the HTH tetR-type domain; sequence INRREHILQC…GLIEFIEDAI (61 aa). Residues 30-49 constitute a DNA-binding region (H-T-H motif); sequence TTAKLAAEVGVSEAALYRHF.

The protein belongs to the nucleoid occlusion factor SlmA family. Homodimer. Interacts with FtsZ.

It localises to the cytoplasm. The protein resides in the nucleoid. Its function is as follows. Required for nucleoid occlusion (NO) phenomenon, which prevents Z-ring formation and cell division over the nucleoid. Acts as a DNA-associated cell division inhibitor that binds simultaneously chromosomal DNA and FtsZ, and disrupts the assembly of FtsZ polymers. SlmA-DNA-binding sequences (SBS) are dispersed on non-Ter regions of the chromosome, preventing FtsZ polymerization at these regions. The sequence is that of Nucleoid occlusion factor SlmA from Shewanella denitrificans (strain OS217 / ATCC BAA-1090 / DSM 15013).